The chain runs to 264 residues: Acyl-[acyl-carrier-protein]--UDP-N-acetylglucosamine O-acyltransferase (264 aa).

Belongs to the transferase hexapeptide repeat family. LpxA subfamily. As to quaternary structure, homotrimer.

The protein resides in the cytoplasm. The catalysed reaction is a (3R)-hydroxyacyl-[ACP] + UDP-N-acetyl-alpha-D-glucosamine = a UDP-3-O-[(3R)-3-hydroxyacyl]-N-acetyl-alpha-D-glucosamine + holo-[ACP]. It participates in glycolipid biosynthesis; lipid IV(A) biosynthesis; lipid IV(A) from (3R)-3-hydroxytetradecanoyl-[acyl-carrier-protein] and UDP-N-acetyl-alpha-D-glucosamine: step 1/6. Involved in the biosynthesis of lipid A, a phosphorylated glycolipid that anchors the lipopolysaccharide to the outer membrane of the cell. This is Acyl-[acyl-carrier-protein]--UDP-N-acetylglucosamine O-acyltransferase from Rickettsia canadensis (strain McKiel).